The chain runs to 253 residues: 5-oxoprolinase subunit A (253 aa).

The protein belongs to the LamB/PxpA family. In terms of assembly, forms a complex composed of PxpA, PxpB and PxpC.

It carries out the reaction 5-oxo-L-proline + ATP + 2 H2O = L-glutamate + ADP + phosphate + H(+). Its function is as follows. Catalyzes the cleavage of 5-oxoproline to form L-glutamate coupled to the hydrolysis of ATP to ADP and inorganic phosphate. The sequence is that of 5-oxoprolinase subunit A from Bacillus anthracis (strain CDC 684 / NRRL 3495).